Reading from the N-terminus, the 210-residue chain is Small ribosomal subunit protein uS4 (210 aa).

The region spanning 99–161 is the S4 RNA-binding domain; that stretch reads RRLDSVIYRM…SKNNATILSA (63 aa).

Belongs to the universal ribosomal protein uS4 family. Part of the 30S ribosomal subunit. Contacts protein S5. The interaction surface between S4 and S5 is involved in control of translational fidelity.

One of the primary rRNA binding proteins, it binds directly to 16S rRNA where it nucleates assembly of the body of the 30S subunit. Functionally, with S5 and S12 plays an important role in translational accuracy. The chain is Small ribosomal subunit protein uS4 from Solibacter usitatus (strain Ellin6076).